The following is a 366-amino-acid chain: Alanine racemase (366 aa).

The active-site Proton acceptor; specific for D-alanine is Lys-40. Residue Lys-40 is modified to N6-(pyridoxal phosphate)lysine. Arg-136 is a substrate binding site. The active-site Proton acceptor; specific for L-alanine is the Tyr-263. Met-310 contributes to the substrate binding site.

The protein belongs to the alanine racemase family. Pyridoxal 5'-phosphate serves as cofactor.

It catalyses the reaction L-alanine = D-alanine. It functions in the pathway amino-acid biosynthesis; D-alanine biosynthesis; D-alanine from L-alanine: step 1/1. Catalyzes the interconversion of L-alanine and D-alanine. May also act on other amino acids. The chain is Alanine racemase (alr) from Streptococcus pyogenes serotype M6 (strain ATCC BAA-946 / MGAS10394).